Here is a 263-residue protein sequence, read N- to C-terminus: Polyglutamine-binding protein 1 (263 aa).

Positions 46-80 (EGLPPSWYKVFDPSCGLPYYWNVDTDLVSWLSPHD) constitute a WW domain. A Phosphoserine modification is found at serine 94. The disordered stretch occupies residues 94–263 (SSNADAEEKL…AEASRTKQQD (170 aa)). Residues 99–173 (AEEKLDRSHE…DKVDREESKE (75 aa)) show a composition bias toward basic and acidic residues. 14 repeat units span residues 104-110 (DRSHEKS), 111-117 (DRGHEKS), 118-124 (DRGHEKS), 125-131 (DRSHEKS), 132-138 (ERNHEKS), 139-140 (DR), 141-142 (DR), 143-144 (ER), 150-151 (DR), 152-153 (ER), 154-155 (ER), 156-157 (DR), 158-159 (DR), and 160-161 (DR). Residues 104-138 (DRSHEKSDRGHEKSDRGHEKSDRSHEKSERNHEKS) are 5 X 7 AA approximate tandem repeats of D-R-[SG]-H-D-K-S. A 3 X 2 AA tandem repeats of [DE]-R region spans residues 139-144 (DRDRER). The 6 X 2 AA tandem repeats of [DE]-R stretch occupies residues 150–161 (DRERERDRDRDR). The important for interaction with TXNL4A stretch occupies residues 243–253 (YPSPGAVLRAN). At serine 245 the chain carries Phosphoserine.

In terms of assembly, interacts with POU3F2/Brn-2, ATXN1, TXNL4A, HTT and AR. Interaction with ATXN1 correlates positively with the length of the polyglutamine tract. Interacts with RNA polymerase II large subunit in a phosphorylation-dependent manner. Forms a ternary complex with ATXN1 mutant and phosphorylated RNA polymerase II. Interacts (via C-terminus) with TXNL4A and CD2BP2. Interacts (via WW domain) with ATN1 and SF3B1, and may interact with additional splice factors. Interacts (via WW domain) with WBP11; Leading to reduce interaction between PQBP1 and TXNL4A. Interacts with CAPRIN1. Interacts with DDX1. Interacts with SFPQ. Interacts with KHSRP.

The protein localises to the nucleus. The protein resides in the nucleus speckle. Its subcellular location is the cytoplasmic granule. Intrinsically disordered protein that acts as a scaffold, and which is involved in different processes, such as pre-mRNA splicing, transcription regulation, innate immunity and neuron development. Interacts with splicing-related factors via the intrinsically disordered region and regulates alternative splicing of target pre-mRNA species. May suppress the ability of POU3F2 to transactivate the DRD1 gene in a POU3F2 dependent manner. Can activate transcription directly or via association with the transcription machinery. May be involved in ATXN1 mutant-induced cell death. The interaction with ATXN1 mutant reduces levels of phosphorylated RNA polymerase II large subunit. Involved in the assembly of cytoplasmic stress granule, possibly by participating in the transport of neuronal RNA granules. Also acts as an innate immune sensor of infection by retroviruses, by detecting the presence of reverse-transcribed DNA in the cytosol. Directly binds retroviral reverse-transcribed DNA in the cytosol and interacts with CGAS, leading to activate the cGAS-STING signaling pathway, triggering type-I interferon production. This is Polyglutamine-binding protein 1 (PQBP1) from Bos taurus (Bovine).